The chain runs to 264 residues: Small ribosomal subunit protein uS2 (264 aa).

Residues 222-246 (GRSENKDEQNEQGEQIAPVTNEEKQ) are disordered.

Belongs to the universal ribosomal protein uS2 family.

The sequence is that of Small ribosomal subunit protein uS2 from Helicobacter hepaticus (strain ATCC 51449 / 3B1).